A 163-amino-acid chain; its full sequence is Phosphopantetheine adenylyltransferase (163 aa).

Position 11 (Ser11) interacts with substrate. ATP contacts are provided by residues 11 to 12 (SF) and His19. 3 residues coordinate substrate: Lys43, Ala76, and Arg90. Residues 91–93 (GLR), Glu101, and 126–132 (WQALSSS) contribute to the ATP site.

Belongs to the bacterial CoaD family. In terms of assembly, homohexamer. Mg(2+) serves as cofactor.

The protein localises to the cytoplasm. It catalyses the reaction (R)-4'-phosphopantetheine + ATP + H(+) = 3'-dephospho-CoA + diphosphate. The protein operates within cofactor biosynthesis; coenzyme A biosynthesis; CoA from (R)-pantothenate: step 4/5. Its function is as follows. Reversibly transfers an adenylyl group from ATP to 4'-phosphopantetheine, yielding dephospho-CoA (dPCoA) and pyrophosphate. The chain is Phosphopantetheine adenylyltransferase from Streptococcus pyogenes serotype M6 (strain ATCC BAA-946 / MGAS10394).